Reading from the N-terminus, the 401-residue chain is UPF0242 protein CPn_0755/CP_1117/CPj0755/CpB0783 (401 aa).

This sequence belongs to the UPF0242 family.

This is UPF0242 protein CPn_0755/CP_1117/CPj0755/CpB0783 from Chlamydia pneumoniae (Chlamydophila pneumoniae).